A 504-amino-acid chain; its full sequence is ATP synthase subunit alpha 2 (504 aa).

169-176 serves as a coordination point for ATP; the sequence is GDRQTGKT.

Belongs to the ATPase alpha/beta chains family. In terms of assembly, F-type ATPases have 2 components, CF(1) - the catalytic core - and CF(0) - the membrane proton channel. CF(1) has five subunits: alpha(3), beta(3), gamma(1), delta(1), epsilon(1). CF(0) has three main subunits: a(1), b(2) and c(9-12). The alpha and beta chains form an alternating ring which encloses part of the gamma chain. CF(1) is attached to CF(0) by a central stalk formed by the gamma and epsilon chains, while a peripheral stalk is formed by the delta and b chains.

Its subcellular location is the cell membrane. It carries out the reaction ATP + H2O + 4 H(+)(in) = ADP + phosphate + 5 H(+)(out). Produces ATP from ADP in the presence of a proton gradient across the membrane. The alpha chain is a regulatory subunit. The polypeptide is ATP synthase subunit alpha 2 (Listeria innocua serovar 6a (strain ATCC BAA-680 / CLIP 11262)).